The following is a 177-amino-acid chain: Large ribosomal subunit protein uL6 (177 aa).

This sequence belongs to the universal ribosomal protein uL6 family. As to quaternary structure, part of the 50S ribosomal subunit.

Its function is as follows. This protein binds to the 23S rRNA, and is important in its secondary structure. It is located near the subunit interface in the base of the L7/L12 stalk, and near the tRNA binding site of the peptidyltransferase center. The protein is Large ribosomal subunit protein uL6 of Cupriavidus necator (strain ATCC 17699 / DSM 428 / KCTC 22496 / NCIMB 10442 / H16 / Stanier 337) (Ralstonia eutropha).